A 102-amino-acid chain; its full sequence is Large ribosomal subunit protein uL24 (102 aa).

The interval 1–22 is disordered; that stretch reads MHVKKGDTVQVMSGKDKGKQGV.

The protein belongs to the universal ribosomal protein uL24 family. Part of the 50S ribosomal subunit.

Its function is as follows. One of two assembly initiator proteins, it binds directly to the 5'-end of the 23S rRNA, where it nucleates assembly of the 50S subunit. One of the proteins that surrounds the polypeptide exit tunnel on the outside of the subunit. This chain is Large ribosomal subunit protein uL24, found in Exiguobacterium sp. (strain ATCC BAA-1283 / AT1b).